We begin with the raw amino-acid sequence, 630 residues long: PAN2-PAN3 deadenylation complex subunit PAN3 (630 aa).

A C3H1-type zinc finger spans residues 7-36 (SAKDTLCKNILIYGYCKFENKGCAFSHHKP). Disordered stretches follow at residues 38–72 (VGQP…PSFQ) and 135–171 (GFGS…QSSG). Low complexity predominate over residues 44-56 (SASSSSGYSGNSS). Polar residues predominate over residues 140 to 149 (YPSSPNTSGA). Residues 231 to 501 (QTLPRSNLPE…LDRFSQRYLT (271 aa)) form a pseudokinase domain region. ATP contacts are provided by residues Arg-283, 333–340 (DYFPNSST), and 388–389 (TK). Positions 502 to 540 (TRLFSTINNLEDSTDFMESQITTELENARLFRLLTKLNF) form a coiled coil. Positions 541-630 (IIDRPEAKDW…DSVFRNLTRD (90 aa)) are knob domain.

The protein belongs to the protein kinase superfamily. PAN3 family. Homodimer. Forms a heterotrimer with a catalytic subunit PAN2 to form the poly(A)-nuclease (PAN) deadenylation complex. Interacts (via PAM-2 motif) with poly(A)-binding protein PAB1 (via PABC domain), conferring substrate specificity of the enzyme complex.

The protein resides in the cytoplasm. Functionally, regulatory subunit of the poly(A)-nuclease (PAN) deadenylation complex, one of two cytoplasmic mRNA deadenylases involved in mRNA turnover. PAN specifically shortens poly(A) tails of RNA and the activity is stimulated by poly(A)-binding protein PAB1. PAN deadenylation is followed by rapid degradation of the shortened mRNA tails by the CCR4-NOT complex. Deadenylated mRNAs are then degraded by two alternative mechanisms, namely exosome-mediated 3'-5' exonucleolytic degradation, or deadenylation-dependent mRNA decaping and subsequent 5'-3' exonucleolytic degradation by XRN1. May also be involved in post-transcriptional maturation of mRNA poly(A) tails. PAN3 acts as a positive regulator for PAN activity, recruiting the catalytic subunit PAN2 to mRNA via its interaction with RNA and with PAB1. This is PAN2-PAN3 deadenylation complex subunit PAN3 from Scheffersomyces stipitis (strain ATCC 58785 / CBS 6054 / NBRC 10063 / NRRL Y-11545) (Yeast).